A 215-amino-acid polypeptide reads, in one-letter code: 3-demethoxyubiquinol 3-hydroxylase (215 aa).

The Fe cation site is built by glutamate 64, glutamate 94, histidine 97, glutamate 146, glutamate 178, and histidine 181.

This sequence belongs to the COQ7 family. Fe cation is required as a cofactor.

It is found in the cell membrane. It carries out the reaction a 5-methoxy-2-methyl-3-(all-trans-polyprenyl)benzene-1,4-diol + AH2 + O2 = a 3-demethylubiquinol + A + H2O. It functions in the pathway cofactor biosynthesis; ubiquinone biosynthesis. In terms of biological role, catalyzes the hydroxylation of 2-nonaprenyl-3-methyl-6-methoxy-1,4-benzoquinol during ubiquinone biosynthesis. This Pseudomonas fluorescens (strain SBW25) protein is 3-demethoxyubiquinol 3-hydroxylase.